Here is a 228-residue protein sequence, read N- to C-terminus: Movement and silencing protein TGBp1 (228 aa).

Residues 1–132 enclose the (+)RNA virus helicase ATP-binding domain; the sequence is MDVLLSLLSE…KCTAQLLNDL (132 aa). The 96-residue stretch at 133-228 folds into the (+)RNA virus helicase C-terminal domain; sequence SYEVESDLAD…LSPNATYTAS (96 aa).

It belongs to the Tymovirales TGBp1 protein family. As to quaternary structure, homodimer and homooligomer. Interacts with capsid protein. Interacts with host AGO1; this interaction targets the host protein for degradation, thereby suppressing the antiviral RNA silencing.

Its subcellular location is the host cytoplasm. Functionally, transports viral genome to neighboring plant cells directly through plasmosdesmata, without any budding. The movement protein allows efficient cell to cell propagation, by bypassing the host cell wall barrier. Increases plasmodesma size exclusion limit. Acts as a suppressor of RNA-mediated gene silencing, also known as post-transcriptional gene silencing (PTGS), a mechanism of plant viral defense that limits the accumulation of viral RNAs. This chain is Movement and silencing protein TGBp1, found in Lilium (LSV).